A 360-amino-acid polypeptide reads, in one-letter code: D-alanine--D-alanine ligase (360 aa).

Positions 149 to 353 (KKLMAAEGLP…YEELLDVLVQ (205 aa)) constitute an ATP-grasp domain. Residue 176-231 (KNLLGLPVFVKPARGGSSIGISRVTAWEDFNKAVGLARAHDEKVIVESEIVGSEVE) participates in ATP binding. The Mg(2+) site is built by D308, E320, and N322.

It belongs to the D-alanine--D-alanine ligase family. Mg(2+) is required as a cofactor. Requires Mn(2+) as cofactor.

The protein localises to the cytoplasm. The catalysed reaction is 2 D-alanine + ATP = D-alanyl-D-alanine + ADP + phosphate + H(+). It functions in the pathway cell wall biogenesis; peptidoglycan biosynthesis. Its function is as follows. Cell wall formation. This Corynebacterium glutamicum (strain ATCC 13032 / DSM 20300 / JCM 1318 / BCRC 11384 / CCUG 27702 / LMG 3730 / NBRC 12168 / NCIMB 10025 / NRRL B-2784 / 534) protein is D-alanine--D-alanine ligase.